Reading from the N-terminus, the 423-residue chain is Gamma-glutamyl phosphate reductase (423 aa).

Belongs to the gamma-glutamyl phosphate reductase family.

It is found in the cytoplasm. It catalyses the reaction L-glutamate 5-semialdehyde + phosphate + NADP(+) = L-glutamyl 5-phosphate + NADPH + H(+). Its pathway is amino-acid biosynthesis; L-proline biosynthesis; L-glutamate 5-semialdehyde from L-glutamate: step 2/2. Functionally, catalyzes the NADPH-dependent reduction of L-glutamate 5-phosphate into L-glutamate 5-semialdehyde and phosphate. The product spontaneously undergoes cyclization to form 1-pyrroline-5-carboxylate. The polypeptide is Gamma-glutamyl phosphate reductase (Pseudomonas putida (strain ATCC 700007 / DSM 6899 / JCM 31910 / BCRC 17059 / LMG 24140 / F1)).